A 465-amino-acid chain; its full sequence is Lipase 10 (465 aa).

A signal peptide spans 1–16 (MKTLLIFLAFLSSIFA). An intrachain disulfide couples cysteine 112 to cysteine 285. The active-site Charge relay system is the serine 196. Residues asparagine 231 and asparagine 319 are each glycosylated (N-linked (GlcNAc...) asparagine). Catalysis depends on charge relay system residues aspartate 348 and histidine 381. Cysteine 364 and cysteine 409 form a disulfide bridge.

The protein belongs to the AB hydrolase superfamily. Lipase family. Class Lip subfamily.

Its subcellular location is the secreted. The catalysed reaction is a triacylglycerol + H2O = a diacylglycerol + a fatty acid + H(+). Secreted lipase that is able to hydrolyze both the neutral triacylglycerols and the monopalmitate ester Tween 40, allowing the use of hydrolyzed products as carbon sources. Has broad lipolytic activity, which may be important for colonization and subsequent infection, therefore contributing to the persistence and virulence in human tissue. This Candida albicans (strain SC5314 / ATCC MYA-2876) (Yeast) protein is Lipase 10.